Consider the following 394-residue polypeptide: Metallophosphoesterase 1 (394 aa).

Residues 27-47 traverse the membrane as a helical segment; the sequence is TVVVISVLLFCEYFIYYLVLF. Residues Asp74, Asp116, Asn154, His247, His301, and His303 each contribute to the a divalent metal cation site. The chain crosses the membrane as a helical span at residues 354–374; sequence TVLTTYCAAAAFLLVLILAHF.

This sequence belongs to the metallophosphoesterase superfamily. MPPE1 family. Interacts with GPI-anchor proteins (via the GPI portion). Interacts with TMED10. Mn(2+) is required as a cofactor.

It localises to the endoplasmic reticulum-Golgi intermediate compartment membrane. Functionally, metallophosphoesterase that catalyzes the removal of a side-chain ethanolamine-phosphate (EtNP) from the second mannose of the GPI-anchor protein intermediate. Participates in the glycan remodeling steps of GPI-anchor maturation to allow an efficient transport of GPI-anchor proteins from the endoplasmic reticulum to the Golgi. This is Metallophosphoesterase 1 from Rattus norvegicus (Rat).